The following is a 107-amino-acid chain: Cytochrome c2 (107 aa).

Glutamine 1 is subject to Pyrrolidone carboxylic acid. Residues cysteine 13, cysteine 16, histidine 17, and methionine 79 each contribute to the heme c site.

This sequence belongs to the cytochrome c family. Binds 1 heme c group covalently per subunit.

It localises to the periplasm. In terms of biological role, cytochrome c2 is found mainly in purple, non-sulfur, photosynthetic bacteria where it functions as the electron donor to the oxidized bacteriochlorophyll in the photophosphorylation pathway. However, it may also have a role in the respiratory chain and is found in some non-photosynthetic bacteria. The protein is Cytochrome c2 of Rhodoplanes tepidamans (Rhodoplanes cryptolactis).